The sequence spans 529 residues: Cytochrome P450 monooxygenase CLM2 (529 aa).

A helical transmembrane segment spans residues 2–19; sequence LLIIVVLVGTLIYFLSFH. N-linked (GlcNAc...) asparagine glycosylation is found at N244 and N281. Residue C438 coordinates heme.

Belongs to the cytochrome P450 family. It depends on heme as a cofactor.

The protein resides in the membrane. The catalysed reaction is (-)-longiborneol + reduced [NADPH--hemoprotein reductase] + O2 = culmorin + oxidized [NADPH--hemoprotein reductase] + H2O + H(+). The protein operates within mycotoxin biosynthesis. Its function is as follows. Cytochrome P450 monooxygenase involved in the biosynthesis of culmorin, a tricyclic sesquiterpene diol reported to have antifungal activity and some phytotoxicity to wheat coleoptile tissue, contributing to Fusarium head blight disease. The terpene cyclase CLM1 is responsible for the cyclization of farnesyl diphosphate into the intermediate longiborneol. Longiborneol is then hydroxylated in a regio- and endo-stereoselective manner at position C-11 by the cytochrome P450 monooxygenase CLM2 to produce culmorin. Additional non-specific oxygenases are also able to hydroxylate longiborneol at other sites than C-11 leading to 3-hydroxylongiborneol, 5-hydroxylongiborneol, 12-hydroxylongiborneol and 15-hydroxylongiborneol. Moreover, another oxygenase capable of installing a C-11 exo-hydroxy group in longiborneol can also yield 11-epi-acetylculmorin. The production of these longiborneol derivatives is dwarfed by the high abundance of culmorin, suggesting that CLM2 displays superior enzymatic activity to the unidentified, possibly promiscuous, additional oxygenases. The sequence is that of Cytochrome P450 monooxygenase CLM2 from Gibberella zeae (strain ATCC MYA-4620 / CBS 123657 / FGSC 9075 / NRRL 31084 / PH-1) (Wheat head blight fungus).